The following is a 146-amino-acid chain: Large ribosomal subunit protein bL9 (146 aa).

The protein belongs to the bacterial ribosomal protein bL9 family.

In terms of biological role, binds to the 23S rRNA. The polypeptide is Large ribosomal subunit protein bL9 (Deinococcus geothermalis (strain DSM 11300 / CIP 105573 / AG-3a)).